The primary structure comprises 313 residues: Pyrimidine-specific ribonucleoside hydrolase RihB (313 aa).

Asp11 serves as the catalytic Proton acceptor. 3 residues coordinate Ca(2+): Asp11, Asp16, and Val124. Substrate contacts are provided by Gln227 and His239. A Ca(2+)-binding site is contributed by Asp240.

The protein belongs to the IUNH family. RihB subfamily. Homotetramer. It depends on Ca(2+) as a cofactor.

The enzyme catalyses a pyrimidine ribonucleoside + H2O = a pyrimidine nucleobase + D-ribose. Functionally, hydrolyzes cytidine or uridine to ribose and cytosine or uracil, respectively. Has a clear preference for cytidine over uridine. Strictly specific for ribonucleosides. The protein is Pyrimidine-specific ribonucleoside hydrolase RihB of Shigella sonnei (strain Ss046).